Here is an 857-residue protein sequence, read N- to C-terminus: MIRQVNKKAISNSLFKRLSLSGSAFANITANKKSSTHQLNQKTQLANVRFYSTKSTVIQLLNNIGSKREVEQYLKYFTSVSQQQFAVIKVGGAIITQQLNELASCLAFLYHVGLYPIVLHGTGPQINELLENEGVEPEYIDGIRITNPKTMEVVRKCFLEQNLRLVTALEKIGVHARPITAGVFEAEYLDKDKYQLVGKITSVNKSPVEAAINSGYLPILTSLAETSSGQLLNVNADVAAGELAREFEPLKIVYLNEKGGIINGNTGEKVSAINLDEEYEDLLKESWVKYGTKLKIKEIHDLLQHLPRSSSVAIIDVNDLQKELFTDSGAGTLIRRGYRLINRNSLRDFGNPDLLRNALLRDPEIKTGKVSVASYLKFLDSVQFKSYGDEPLEVLAIVVEQNDKIPKLDEFLSSKTGWLNNVTDNIFNAIKKDYSQLCWVVNENDANLPWYFSKSDGSFAKNGQILFWYGLNIDEASKLIKEFDSSSIGSSLSSSKESGVFTSAQQKRGFHHSTVRRNTNPNPPLSEGKQTERKKVALIGARGYTGQNLIKLIDNHPYLDISYVSSRELEGQKLQGYNKDNIVYSNLQIEDIKRLEENNEVDVWVMALPNGVCKPFVDTIDLVQNPNSKIVDLSADYRFDTTGEWTYGLPELNDRKTIAQAKKISNPGCYATAAQVAIAPLKEYISGTPSIFGVSGYSGAGTKPSPKNDVNLLSNNLIPYSLTDHVHEKEISSQLGLQVAFTPHVAQWFQGITHTINIPIKKGSLTSREIRNIYQDRYQGEKLITISGEAPLVKDISGKHGVVVGGFAVNSNEDRVVIVATIDNLLKGAATQCLQNINLSQEFGEYDGIPTESLIRG.

Positions 341–492 (INRNSLRDFG…FDSSSIGSSL (152 aa)) constitute an N-acetyltransferase domain. The tract at residues 509 to 532 (GFHHSTVRRNTNPNPPLSEGKQTE) is disordered. Cys669 is an active-site residue.

In the N-terminal section; belongs to the acetylglutamate kinase family. It in the C-terminal section; belongs to the NAGSA dehydrogenase family.

Its subcellular location is the mitochondrion. The catalysed reaction is N-acetyl-L-glutamate 5-semialdehyde + phosphate + NADP(+) = N-acetyl-L-glutamyl 5-phosphate + NADPH + H(+). It catalyses the reaction N-acetyl-L-glutamate + ATP = N-acetyl-L-glutamyl 5-phosphate + ADP. It participates in amino-acid biosynthesis; L-arginine biosynthesis; N(2)-acetyl-L-ornithine from L-glutamate: step 2/4. The protein operates within amino-acid biosynthesis; L-arginine biosynthesis; N(2)-acetyl-L-ornithine from L-glutamate: step 3/4. This chain is Protein ARG5,6, mitochondrial (ARG5,6), found in Candida albicans (Yeast).